Consider the following 483-residue polypeptide: Probable cytosol aminopeptidase (483 aa).

Lys252 and Asp257 together coordinate Mn(2+). Lys264 is a catalytic residue. Asp275, Asp334, and Glu336 together coordinate Mn(2+). Arg338 is an active-site residue.

This sequence belongs to the peptidase M17 family. Mn(2+) is required as a cofactor.

It is found in the cytoplasm. The catalysed reaction is Release of an N-terminal amino acid, Xaa-|-Yaa-, in which Xaa is preferably Leu, but may be other amino acids including Pro although not Arg or Lys, and Yaa may be Pro. Amino acid amides and methyl esters are also readily hydrolyzed, but rates on arylamides are exceedingly low.. The enzyme catalyses Release of an N-terminal amino acid, preferentially leucine, but not glutamic or aspartic acids.. Its function is as follows. Presumably involved in the processing and regular turnover of intracellular proteins. Catalyzes the removal of unsubstituted N-terminal amino acids from various peptides. The chain is Probable cytosol aminopeptidase from Legionella pneumophila (strain Paris).